We begin with the raw amino-acid sequence, 211 residues long: MRKYIKIGVAGPVGAGKTALIERLTREIASKYSVAVITNDIYTQEDAEFLTKNSLLPPERIMGVETGGCPHTAIREDASMNLEAVDEMVARFPEVELIFIESGGDNLSATFSPDLADVTIFVIDVAQGEKIPRKGGPGISRSDLLVINKTDLAPFVGADLSVMERDARRMRNGQPFIFTNLMKNENLDGVIGWIEKYALLKNIEDPASLVR.

11 to 18 serves as a coordination point for GTP; it reads GPVGAGKT.

This sequence belongs to the SIMIBI class G3E GTPase family. UreG subfamily. Homodimer. UreD, UreF and UreG form a complex that acts as a GTP-hydrolysis-dependent molecular chaperone, activating the urease apoprotein by helping to assemble the nickel containing metallocenter of UreC. The UreE protein probably delivers the nickel.

It is found in the cytoplasm. In terms of biological role, facilitates the functional incorporation of the urease nickel metallocenter. This process requires GTP hydrolysis, probably effectuated by UreG. This is Urease accessory protein UreG from Actinobacillus pleuropneumoniae (Haemophilus pleuropneumoniae).